The sequence spans 471 residues: 7-hydroxymethyl chlorophyll a reductase, chloroplastic (471 aa).

Residues 1–44 constitute a chloroplast transit peptide; it reads MARCISFLSTSSSLPCATKPPCCSVSSVLPSSPSSHQCRGRKTS.

Belongs to the FrhB family. The cofactor is FAD. It depends on iron-sulfur cluster as a cofactor.

The protein localises to the plastid. It localises to the chloroplast. The catalysed reaction is chlorophyll a + 2 oxidized [2Fe-2S]-[ferredoxin] + H2O = 7(1)-hydroxychlorophyll a + 2 reduced [2Fe-2S]-[ferredoxin] + 2 H(+). Probable iron-sulfur flavoprotein that converts 7-hydroxymethyl chlorophyll a to chlorophyll a using ferredoxin as a reducing equivalent. Catalyzes the reduction of a hydroxymethyl group to a methyl group. The protein is 7-hydroxymethyl chlorophyll a reductase, chloroplastic (HCAR) of Oryza sativa subsp. japonica (Rice).